The primary structure comprises 774 residues: MEDPGETEAHPLGATSLNFVPGYQQEEKPSPDPLYDTPDARGVQAGGSQQPARTVSLRERLLITRPVWLQLRANAAAALHVLRTEPPGTFLVRKSNTRQCQTLCVRLPEASGPSFVSSHYLQESPGGISLEGSELTFPDLVQLICAYCHTRDILLLPLPLPRAIHQAATHKELEAISHLGMEFWSSSLNTKNQQRPSEAPQIPRLKARSPQELDQGTGAALCFFNPLFPGDLGPTKREKFKRSFKVRVSTETSSPLSPPAVPPPPVPVLPGTSSSQTERLPPRQLLQRESSVGYRVPGSASGPSLPPLPSLQEVDCCSPSSSEEEGSSGSPTTSPRLSRPRHRRPLLRSMSSAFCSLLAPERQVGRAATMLMQNRYTAVGQLVQDLLTQVRVGPESRELQGIRQALSRARAMLSAELGPEKLLPPERLELVLEKSLHRSVLKPLRPILAARLRRRLSTDGSLGRLAEGFRLARTQGPGAFGSHLNLSSPVEIEPVRQKLLQLLRAYSPSAQIKWLLQACKLLYTALKTQAGENAGADEFLPLLSLVLAQCDLPDLLLEAEYMSELLEPTLLTGEGGYYLTSLSASLALLSGLSQAHALPLSPAQELQRSLALWEQRRLPATHNFQHLLRVAYQDPSTGCTSKTLAVPPGSSIATLSQLCATKFRVTQPDAFGLFLYKDQGYHRLPPEALVHRLPTTGYLIYRRAERPETQRAATEKTKTGNERPERGAWEEEKGGLNGEGKSEIAVDQEGKDQARGGHMQLEEQKAEGCPALEE.

Met1 is subject to N-acetylmethionine. The interval Met1 to Ala52 is disordered. Ser16 is subject to Phosphoserine. Tyr35 carries the post-translational modification Phosphotyrosine; by ABL1 and ABL2. In terms of domain architecture, SH2 spans Trp68–Arg162. 2 disordered regions span residues Leu188–Gln211 and Ser249–His342. Ser209, Ser257, Ser330, and Ser334 each carry phosphoserine. Positions Leu256–Val268 are enriched in pro residues. Over residues Ser327–Leu337 the composition is skewed to low complexity. Residue Ser351 is modified to Phosphoserine; by PKD/PRKD1. The VPS9 domain maps to Leu456–Leu598. Residue Ser609 is modified to Phosphoserine. Residues Phe624–Arg706 enclose the Ras-associating domain. At Arg692 the chain carries Omega-N-methylarginine. Over residues Ala704 to Ala766 the composition is skewed to basic and acidic residues. Residues Ala704–Glu774 are disordered.

It belongs to the RIN (Ras interaction/interference) family. Interacts with the GTP-bound form of Ras proteins (NRAS, HRAS and KRAS). This interaction prevents the association between RAF1 and Ras. Interacts with 14-3-3 proteins YWHAB, YWHAE and YWHAZ when phosphorylated on Ser-351. Interacts with the SH3 domain of ABL1 and ABL2. Interacts with RAB5A. The interaction with Ras is probably regulated and antagonized by the interaction with 14-3-3 proteins. The interaction with 14-3-3 proteins is regulated by phosphorylation on Ser-351. Phosphorylated on tyrosine residues by ABL1 and ABL2. Phosphorylation at Ser-351 by PRKD1 induces interaction with 14-3-3 proteins.

The protein resides in the cytoplasm. It is found in the membrane. The protein localises to the cytoskeleton. Ras effector protein, which may serve as an inhibitory modulator of neuronal plasticity in aversive memory formation. Can affect Ras signaling at different levels. First, by competing with RAF1 protein for binding to activated Ras. Second, by enhancing signaling from ABL1 and ABL2, which regulate cytoskeletal remodeling. Third, by activating RAB5A, possibly by functioning as a guanine nucleotide exchange factor (GEF) for RAB5A, by exchanging bound GDP for free GTP, and facilitating Ras-activated receptor endocytosis. The protein is Ras and Rab interactor 1 (Rin1) of Rattus norvegicus (Rat).